The sequence spans 1115 residues: Phytochrome E (1115 aa).

The 171-residue stretch at 213-383 folds into the GAF domain; the sequence is DIGTLCDTVV…AFSLQLYMEL (171 aa). Cysteine 318 contacts phytochromobilin. The PAS 1 domain occupies 598 to 669; sequence MALELVRLVE…ALMCRALQGE (72 aa). The 57-residue stretch at 672-728 folds into the PAC domain; sequence RNVEVKLLKFGNHPTKEVVYLVVNACTSRDYKNDIIGVCFVGQDITPEKAVMDKFVR. The PAS 2 domain maps to 732–803; that stretch reads DYEAIIQSLN…DALTKFMILL (72 aa). The region spanning 880 to 1100 is the Histidine kinase domain; the sequence is YIQQQMKNPL…YFLIDLDFKT (221 aa).

It belongs to the phytochrome family. In terms of assembly, homodimer. Contains one covalently linked phytochromobilin chromophore.

Regulatory photoreceptor which exists in two forms that are reversibly interconvertible by light: the Pr form that absorbs maximally in the red region of the spectrum and the Pfr form that absorbs maximally in the far-red region. Photoconversion of Pr to Pfr induces an array of morphogenic responses, whereas reconversion of Pfr to Pr cancels the induction of those responses. Pfr controls the expression of a number of nuclear genes including those encoding the small subunit of ribulose-bisphosphate carboxylase, chlorophyll A/B binding protein, protochlorophyllide reductase, rRNA, etc. It also controls the expression of its own gene(s) in a negative feedback fashion. This is Phytochrome E (PHYE) from Ipomoea nil (Japanese morning glory).